The sequence spans 312 residues: Ribosomal RNA small subunit methyltransferase H (312 aa).

Residues 34–36 (GGH), Asp-54, Phe-81, Asp-102, and Gln-109 each bind S-adenosyl-L-methionine.

Belongs to the methyltransferase superfamily. RsmH family.

Its subcellular location is the cytoplasm. It catalyses the reaction cytidine(1402) in 16S rRNA + S-adenosyl-L-methionine = N(4)-methylcytidine(1402) in 16S rRNA + S-adenosyl-L-homocysteine + H(+). In terms of biological role, specifically methylates the N4 position of cytidine in position 1402 (C1402) of 16S rRNA. In Geotalea uraniireducens (strain Rf4) (Geobacter uraniireducens), this protein is Ribosomal RNA small subunit methyltransferase H.